The sequence spans 403 residues: SEC14-like protein 2 (403 aa).

An N6-succinyllysine mark is found at Lys11 and Lys51. The CRAL-TRIO domain occupies 76 to 249 (PPEVVQQYLS…EYGGTMTDPD (174 aa)). Lys253 and Lys257 each carry N6-succinyllysine. In terms of domain architecture, GOLD spans 275 to 383 (KQQYEHSVQI…AKKVSFTVEV (109 aa)). Residue Lys393 is modified to N6-succinyllysine.

Monomer. The N-terminus is blocked.

The protein localises to the cytoplasm. It localises to the nucleus. In terms of biological role, carrier protein. Binds to some hydrophobic molecules and promotes their transfer between the different cellular sites. Binds with high affinity to alpha-tocopherol. Also binds with a weaker affinity to other tocopherols and to tocotrienols. May have a transcriptional activatory activity via its association with alpha-tocopherol. Probably recognizes and binds some squalene structure, suggesting that it may regulate cholesterol biosynthesis by increasing the transfer of squalene to a metabolic active pool in the cell. The polypeptide is SEC14-like protein 2 (SEC14L2) (Bos taurus (Bovine)).